The primary structure comprises 195 residues: Probable septum site-determining protein MinC (195 aa).

Belongs to the MinC family. As to quaternary structure, interacts with MinD and FtsZ.

Cell division inhibitor that blocks the formation of polar Z ring septums. Rapidly oscillates between the poles of the cell to destabilize FtsZ filaments that have formed before they mature into polar Z rings. Prevents FtsZ polymerization. The polypeptide is Probable septum site-determining protein MinC (Helicobacter pylori (strain P12)).